The sequence spans 205 residues: Photosystem I assembly protein Ycf4 (205 aa).

2 helical membrane-spanning segments follow: residues 23-43 (WATV…SSYI) and 86-106 (LMCF…CLIF).

This sequence belongs to the Ycf4 family.

Its subcellular location is the plastid. It localises to the chloroplast thylakoid membrane. Seems to be required for the assembly of the photosystem I complex. The sequence is that of Photosystem I assembly protein Ycf4 from Tetradesmus obliquus (Green alga).